We begin with the raw amino-acid sequence, 453 residues long: Pre-mRNA-splicing factor prp46 (453 aa).

A compositionally biased stretch (low complexity) spans 62–71; that stretch reads EKQAKAAAAG. The segment at 62-129 is disordered; that stretch reads EKQAKAAAAG…PSATRQQRPD (68 aa). WD repeat units lie at residues 142–181, 184–223, 226–265, 268–309, 311–350, 351–389, and 400–439; these read GHLGWVRSLAVEPNNEWFASGAGDRTIKIWNLATGALRLT, GHISTVRGLAVSPRHPYLFSCGEDKMVKCWDLETNKVIRH, GHLSGVYTLALHPRLDLLVTGGRDGVARVWDMRTRSNIHV, GHKG…GVLT, HKKGVRNLAIHPREFTFASASTGSIKQWKCPEGDFMQNFE, GHNAVINSLAVNEDNVLFSGGDNGSMCFWDWKTGYKFQS, and DAEAGIMSATFDRTGLRLITGEADKTIKVWKPDDEATPES. Residues 432 to 453 form a disordered region; that stretch reads DDEATPESHPVTWAPTLGRQRY.

Belongs to the WD repeat PRL1/PRL2 family. As to quaternary structure, associated with the spliceosome.

It localises to the cytoplasm. It is found in the nucleus. Its function is as follows. Involved in pre-mRNA splicing and required for cell cycle progression at G2/M. The chain is Pre-mRNA-splicing factor prp46 (prp46) from Aspergillus fumigatus (strain ATCC MYA-4609 / CBS 101355 / FGSC A1100 / Af293) (Neosartorya fumigata).